The primary structure comprises 84 residues: Protein Tlp homolog (84 aa).

Residues 1-20 (MGKEERYTKKPKPDDRSDNV) form a disordered region.

This sequence belongs to the Tlp family.

The sequence is that of Protein Tlp homolog from Caldanaerobacter subterraneus subsp. tengcongensis (strain DSM 15242 / JCM 11007 / NBRC 100824 / MB4) (Thermoanaerobacter tengcongensis).